A 101-amino-acid polypeptide reads, in one-letter code: Small ribosomal subunit protein uS14 (101 aa).

Residues L51 to P70 form a disordered region. Positions P52–G68 are enriched in polar residues.

It belongs to the universal ribosomal protein uS14 family. Part of the 30S ribosomal subunit. Contacts proteins S3 and S10.

Binds 16S rRNA, required for the assembly of 30S particles and may also be responsible for determining the conformation of the 16S rRNA at the A site. This is Small ribosomal subunit protein uS14 from Mannheimia succiniciproducens (strain KCTC 0769BP / MBEL55E).